Reading from the N-terminus, the 332-residue chain is MITFQDVSKTYAQGGHPALSGVSLSVKAGEVFGVIGASGAGKSTLIRLINGLETPSAGQVIVDGDDVAALGVAGLRALRRRVGMIFQHFNLLSGKTVAQNVAFPLKLAGRPAAEVKARTAELLERVGLSAHAGKYPAQLSGGQKQRVGIARALATNPKVLLCDEATSALDPETTEQILDLIAGLNRELGLTIVLITHEMDVVRRVCDRVAVLDAGRVVEEGAVEEVFLHPASDTARRFVREAEGDVTAAPGVGGRVVRLTFKGEATYKPVLGEVARATGVDYSILGGRIHRLRETPYGQLTLALTGGDVAAAIAQFQAAGVRVDALSGETAQ.

An ABC transporter domain is found at 2 to 239; it reads ITFQDVSKTY…PASDTARRFV (238 aa). Position 36–43 (36–43) interacts with ATP; that stretch reads GASGAGKS.

This sequence belongs to the ABC transporter superfamily. Methionine importer (TC 3.A.1.24) family. As to quaternary structure, the complex is composed of two ATP-binding proteins (MetN), two transmembrane proteins (MetI) and a solute-binding protein (MetQ).

The protein resides in the cell inner membrane. It catalyses the reaction L-methionine(out) + ATP + H2O = L-methionine(in) + ADP + phosphate + H(+). The enzyme catalyses D-methionine(out) + ATP + H2O = D-methionine(in) + ADP + phosphate + H(+). In terms of biological role, part of the ABC transporter complex MetNIQ involved in methionine import. Responsible for energy coupling to the transport system. The protein is Methionine import ATP-binding protein MetN of Caulobacter vibrioides (strain ATCC 19089 / CIP 103742 / CB 15) (Caulobacter crescentus).